Here is a 331-residue protein sequence, read N- to C-terminus: Holliday junction branch migration complex subunit RuvB (331 aa).

Residues 1–182 (MSSDTLHKYE…FGIPLHLEFY (182 aa)) are large ATPase domain (RuvB-L). ATP contacts are provided by residues Leu-21, Arg-22, Gly-63, Lys-66, Thr-67, Thr-68, 129–131 (EDY), Arg-172, Tyr-182, and Arg-219. Thr-67 contacts Mg(2+). The segment at 183-254 (SVDELVLVIK…FANSALFRLG (72 aa)) is small ATPAse domain (RuvB-S). Positions 257–331 (GAGFDKMDLK…FEYLLSSKYI (75 aa)) are head domain (RuvB-H). DNA-binding residues include Arg-310 and Arg-315.

This sequence belongs to the RuvB family. As to quaternary structure, homohexamer. Forms an RuvA(8)-RuvB(12)-Holliday junction (HJ) complex. HJ DNA is sandwiched between 2 RuvA tetramers; dsDNA enters through RuvA and exits via RuvB. An RuvB hexamer assembles on each DNA strand where it exits the tetramer. Each RuvB hexamer is contacted by two RuvA subunits (via domain III) on 2 adjacent RuvB subunits; this complex drives branch migration. In the full resolvosome a probable DNA-RuvA(4)-RuvB(12)-RuvC(2) complex forms which resolves the HJ.

The protein localises to the cytoplasm. The enzyme catalyses ATP + H2O = ADP + phosphate + H(+). Functionally, the RuvA-RuvB-RuvC complex processes Holliday junction (HJ) DNA during genetic recombination and DNA repair, while the RuvA-RuvB complex plays an important role in the rescue of blocked DNA replication forks via replication fork reversal (RFR). RuvA specifically binds to HJ cruciform DNA, conferring on it an open structure. The RuvB hexamer acts as an ATP-dependent pump, pulling dsDNA into and through the RuvAB complex. RuvB forms 2 homohexamers on either side of HJ DNA bound by 1 or 2 RuvA tetramers; 4 subunits per hexamer contact DNA at a time. Coordinated motions by a converter formed by DNA-disengaged RuvB subunits stimulates ATP hydrolysis and nucleotide exchange. Immobilization of the converter enables RuvB to convert the ATP-contained energy into a lever motion, pulling 2 nucleotides of DNA out of the RuvA tetramer per ATP hydrolyzed, thus driving DNA branch migration. The RuvB motors rotate together with the DNA substrate, which together with the progressing nucleotide cycle form the mechanistic basis for DNA recombination by continuous HJ branch migration. Branch migration allows RuvC to scan DNA until it finds its consensus sequence, where it cleaves and resolves cruciform DNA. The chain is Holliday junction branch migration complex subunit RuvB from Anaplasma marginale (strain St. Maries).